A 446-amino-acid chain; its full sequence is Zinc finger protein 19 (446 aa).

A KRAB domain is found at 2 to 73 (VTFEDVAVHF…EAQDDPPAET (72 aa)). C2H2-type zinc fingers lie at residues 149–171 (FICE…QRIH), 177–199 (FECS…QRIH), 205–227 (YQCE…QRIH), 233–255 (YYCT…QRIH), 261–283 (YECN…QKIH), 289–311 (YECN…QRIH), 317–339 (YSCK…QRIH), 345–367 (FDCV…LRIH), and 373–395 (YVCD…QRIH). The segment at 401 to 423 (YEYSKYEKAFGTSSQLGHLEHVH) adopts a C2H2-type 10; degenerate zinc-finger fold.

Belongs to the krueppel C2H2-type zinc-finger protein family.

The protein resides in the nucleus. Its function is as follows. May be involved in transcriptional regulation. The protein is Zinc finger protein 19 (ZNF19) of Pongo abelii (Sumatran orangutan).